The sequence spans 167 residues: General odorant-binding protein 1 (167 aa).

The N-terminal stretch at 1–22 (MAHTLQTVVLLLGTSILHPILA) is a signal peptide. 3 cysteine pairs are disulfide-bonded: C41–C76, C72–C130, and C119–C139.

The protein belongs to the PBP/GOBP family. As to expression, antenna.

Its function is as follows. Present in the aqueous fluid surrounding olfactory sensory dendrites and are thought to aid in the capture and transport of hydrophobic odorants into and through this fluid. The sequence is that of General odorant-binding protein 1 from Antheraea pernyi (Chinese oak silk moth).